The chain runs to 237 residues: Urease accessory protein UreF (237 aa).

This sequence belongs to the UreF family. UreD, UreF and UreG form a complex that acts as a GTP-hydrolysis-dependent molecular chaperone, activating the urease apoprotein by helping to assemble the nickel containing metallocenter of UreC. The UreE protein probably delivers the nickel.

The protein resides in the cytoplasm. Its function is as follows. Required for maturation of urease via the functional incorporation of the urease nickel metallocenter. This chain is Urease accessory protein UreF, found in Streptococcus thermophilus (strain ATCC BAA-250 / LMG 18311).